The chain runs to 45 residues: MSKRTFQPNNRRRAKVHGFRLRMRTRAGRAILAARRRKGRVELSA.

It belongs to the bacterial ribosomal protein bL34 family.

This is Large ribosomal subunit protein bL34 from Beutenbergia cavernae (strain ATCC BAA-8 / DSM 12333 / CCUG 43141 / JCM 11478 / NBRC 16432 / NCIMB 13614 / HKI 0122).